The chain runs to 370 residues: NAD-dependent histone deacetylase HST4 (370 aa).

Residues 1–27 (MKQKFVLPITPPSTAEKKPQTENRCNE) are disordered. Over residues 15–27 (AEKKPQTENRCNE) the composition is skewed to basic and acidic residues. The 296-residue stretch at 75-370 (RHHMDRDAGF…GDCQHVTSLL (296 aa)) folds into the Deacetylase sirtuin-type domain. NAD(+)-binding positions include 100 to 119 (GAGI…EGIF) and 184 to 187 (QNID). The Proton acceptor role is filled by His-213. Zn(2+)-binding residues include Cys-221, Cys-224, Cys-251, and Cys-254. Residues 310–312 (GTS), 340–342 (NTS), and Cys-363 each bind NAD(+).

It belongs to the sirtuin family. Class I subfamily. Requires Zn(2+) as cofactor.

The protein localises to the nucleus. It carries out the reaction N(6)-acetyl-L-lysyl-[protein] + NAD(+) + H2O = 2''-O-acetyl-ADP-D-ribose + nicotinamide + L-lysyl-[protein]. Its function is as follows. NAD-dependent histone deacetylase, which contributes together with HST3 to histone H3 'Lys-56' deacetylation, regulation of telomeric silencing, proper cell cycle progression, DNA damage control, DNA recombination, and genomic maintenance. This chain is NAD-dependent histone deacetylase HST4 (HST4), found in Saccharomyces cerevisiae (strain ATCC 204508 / S288c) (Baker's yeast).